Reading from the N-terminus, the 436-residue chain is Methylenetetrahydrofolate--tRNA-(uracil-5-)-methyltransferase TrmFO (436 aa).

7–12 (GAGLAG) is an FAD binding site.

This sequence belongs to the MnmG family. TrmFO subfamily. Requires FAD as cofactor.

Its subcellular location is the cytoplasm. The catalysed reaction is uridine(54) in tRNA + (6R)-5,10-methylene-5,6,7,8-tetrahydrofolate + NADH + H(+) = 5-methyluridine(54) in tRNA + (6S)-5,6,7,8-tetrahydrofolate + NAD(+). It catalyses the reaction uridine(54) in tRNA + (6R)-5,10-methylene-5,6,7,8-tetrahydrofolate + NADPH + H(+) = 5-methyluridine(54) in tRNA + (6S)-5,6,7,8-tetrahydrofolate + NADP(+). Its function is as follows. Catalyzes the folate-dependent formation of 5-methyl-uridine at position 54 (M-5-U54) in all tRNAs. This Caldicellulosiruptor bescii (strain ATCC BAA-1888 / DSM 6725 / KCTC 15123 / Z-1320) (Anaerocellum thermophilum) protein is Methylenetetrahydrofolate--tRNA-(uracil-5-)-methyltransferase TrmFO.